The primary structure comprises 959 residues: MKSEVSSDAPKRQENFKGVLLNPETIGASKSFPKEVEMIASKVSNEFNHLCSDTNKQQSDLNSNGTEQDKSLVVHKKRKSQQAGTSYAQSCEVKEYQRLLRLQPKSDEDNDSSFSDCISSPSSSSHFGDSDTMTSDEDKDNPLSSVNSTPRTQSARAQKWPRPHTDSVSSLLMKRPCYQVSSLRRPLHRKRFVKNVSSQRTQKQKERMMLQRKKREVLARQKYALLPSSSSSSENDLSSESSSSSSTEGEDLFVSTGENRQDGTTLPSGGMDEDVVVIEASSTPQVTANEEINVTSTDSEVEIVTVGETYRSRATLRHPRSHWGQNSQSGRTQEQRTRNRVSTVIQPLRQNTTEVVDLTVDEDDPTVVQTTSGRVESQPVSIVSSLTSTSEPASDSMSGLMGSAVPEIPAIPPNTVGTIADDSRTCTSGANADGGPPAMPRLPSCCPQHSPCGGSSQNHVLGHPHSSCFPPHSHHFPHHHHHHHHSSHPGVPLSPSFRDSHCTVERNAAVPPPCGVSSSSGSTYHDPQALPVDLSNNGIRSHGSVGFHSTSAFDPCCPGSSSRSTVYGHQATTSTAQTMAIDGYGSSMVAQAQPPPPTPLSSCRHYMHASYTSLPRPLHHQTSSCPHSNSASQPPPPPPPPPPPPMDYVIAHQVPFISPLPSLTSTHAVPPPPPSHHLSAAAAPLPQHLSTSHQSMSHHISATAPVTQRLHAHEVIQRMEVQRRRMMQHPTRAHERPPPHPHRMHPNYGHGHHIHVPQTMSSHPRQGPERSAWEIAIETGVTAATYQTGPLHTHLAHYHPPPRLHHLQIGALPLMVPDMAGYPHIRYISSGLDGRSFRVPFRGNFEELIHLEERLGNVNRGASQGTIERCTYPHKYKKVSTDWFSQRKLHSKQDGEEATEEDTEEKCTICLSILEEGEDVRRLPCMHLFHQVCVDQWLITNKKCPICRVDIDTQLPTES.

Over residues 51-66 the composition is skewed to polar residues; the sequence is CSDTNKQQSDLNSNGT. 3 disordered regions span residues 51–171, 189–212, and 225–271; these read CSDT…VSSL, RKRF…MLQR, and LLPS…SGGM. Positions 112-131 are enriched in low complexity; it reads SSFSDCISSPSSSSHFGDSD. Positions 142-156 are enriched in polar residues; it reads PLSSVNSTPRTQSAR. Residues 228 to 246 show a composition bias toward low complexity; sequence SSSSSSENDLSSESSSSSS. Positions 256–267 are enriched in polar residues; it reads TGENRQDGTTLP. The SUMO interaction motif 1 (SIM) motif lies at 275–279; it reads VVVIE. Positions 300–306 match the SUMO interaction motif 2 (SIM) motif; it reads EVEIVTV. A disordered region spans residues 318–341; sequence HPRSHWGQNSQSGRTQEQRTRNRV. Positions 323–332 are enriched in polar residues; it reads WGQNSQSGRT. Residues 355-359 carry the SUMO interaction motif 3 (SIM) motif; the sequence is VVDLT. Positions 370–397 are enriched in polar residues; that stretch reads TTSGRVESQPVSIVSSLTSTSEPASDSM. 4 disordered regions span residues 370 to 399, 475 to 499, 615 to 649, and 661 to 680; these read TTSG…SMSG, HFPH…SFRD, PRPL…MDYV, and PSLT…HLSA. Positions 475–487 are enriched in basic residues; the sequence is HFPHHHHHHHHSS. Residues 620-632 show a composition bias toward polar residues; sequence HQTSSCPHSNSAS. The segment covering 633–646 has biased composition (pro residues); sequence QPPPPPPPPPPPPM. The segment at 872–874 is ubiquitin binding; the sequence is YPH. Zn(2+) is bound by residues Cys907 and Cys910. An RING-type; atypical zinc finger spans residues 907-948; sequence CTICLSILEEGEDVRRLPCMHLFHQVCVDQWLITNKKCPICR. The interval 922–926 is ubiquitin binding; that stretch reads RLPCM. His930 and Cys933 together coordinate Zn(2+).

It belongs to the Arkadia family. Monomer.

It localises to the nucleus. Its subcellular location is the cytoplasm. The protein resides in the PML body. The catalysed reaction is S-ubiquitinyl-[E2 ubiquitin-conjugating enzyme]-L-cysteine + [acceptor protein]-L-lysine = [E2 ubiquitin-conjugating enzyme]-L-cysteine + N(6)-ubiquitinyl-[acceptor protein]-L-lysine.. It functions in the pathway protein modification; protein ubiquitination. Its activity is regulated as follows. Binds free ubiquitin non-covalently via its RING-type zinc finger. Ubiquitin-binding leads to enhance the E3 ubiquitin-protein ligase activity by stabilizing the ubiquitin-conjugating enzyme E2 (donor ubiquitin) in the 'closed' conformation and activating ubiquitin transfer. Its function is as follows. E3 ubiquitin-protein ligase required for mesoderm patterning during embryonic development. Acts as an enhancer of the transcriptional responses of the smad2/smad3 effectors, which are activated downstream of BMP. Acts by mediating ubiquitination and degradation of SMAD inhibitors such as smad7, inducing their proteasomal degradation and thereby enhancing the transcriptional activity of TGF-beta and BMP. Specifically binds polysumoylated chains via SUMO interaction motifs (SIMs) and mediates ubiquitination of sumoylated substrates. The regulation of the BMP-SMAD signaling is however independent of sumoylation and is not dependent of SUMO interaction motifs (SIMs). This chain is E3 ubiquitin-protein ligase arkadia-B (rnf111-b), found in Xenopus laevis (African clawed frog).